Consider the following 631-residue polypeptide: Mitochondrial Rho GTPase 1 (631 aa).

At 1 to 605 (MPAGRGRPLR…TQADLKSSTF (605 aa)) the chain is on the cytoplasmic side. One can recognise a Miro 1 domain in the interval 15–181 (KKDVRILLVG…FYYAQKAVLH (167 aa)). GTP-binding residues include Arg-27, Gly-29, Lys-30, Thr-31, and Ser-32. A Mg(2+)-binding site is contributed by Thr-31. The Mg(2+) site is built by Pro-48 and Asp-70. Ser-72 is a GTP binding site. Lys-105 carries the post-translational modification N6-acetyllysine. GTP is bound by residues Asn-131, Lys-132, Asp-134, Ala-162, and Lys-163. Residue Lys-166 forms a Glycyl lysine isopeptide (Lys-Gly) (interchain with G-Cter in ubiquitin) linkage. The region spanning 197–232 (ACIKALTRIFKISDQDNDGTLNDAELNFFQRICFNT) is the EF-hand 1 domain. 5 residues coordinate Ca(2+): Asp-210, Asp-212, Asp-214, Thr-216, and Glu-221. A Glycyl lysine isopeptide (Lys-Gly) (interchain with G-Cter in ubiquitin) cross-link involves residue Lys-248. The 36-residue stretch at 317–352 (HAYLFLQSTFDKHDLDRDCALSPDELKDLFKVFPYI) folds into the EF-hand 2 domain. Ca(2+)-binding residues include Asp-330, Asp-332, Asp-334, Ala-336, and Glu-341. The Miro 2 domain occupies 429 to 592 (RNVFRCNVIG…FVKLTTMAMY (164 aa)). Residues Asn-441, Cys-442, Gly-443, Lys-444, Ser-445, Gly-446, Lys-460, Lys-541, Asp-543, Thr-571, and Cys-572 each contribute to the GTP site. Mg(2+) is bound at residue Asn-441. Residue Lys-585 forms a Glycyl lysine isopeptide (Lys-Gly) (interchain with G-Cter in ubiquitin) linkage. The chain crosses the membrane as a helical; Anchor for type IV membrane protein span at residues 606 to 628 (WLRASFGATVFAVLGFAMYKALL). The Mitochondrial intermembrane portion of the chain corresponds to 629 to 631 (KQR).

This sequence belongs to the mitochondrial Rho GTPase family. As to quaternary structure, homodimer. Interacts with the kinesin-binding proteins TRAK1/OIP106 and TRAK2/GRIF1, forming a link between mitochondria and the trafficking apparatus of the microtubules. Interacts with RAP1GDS1. Interacts with ARMCX1. Found in a complex with KIF5B, OGT, RHOT2 and TRAK1. In terms of processing, ubiquitinated by PRKN during mitophagy, leading to its degradation and enhancement of mitophagy. Deubiquitinated by USP30. Post-translationally, acetylation on Lys-105 decreases sensitivity of mitochondrial transport to elevated Ca(2+) levels, increases mitochondrial transport and promotes axon growth. Deacetylated by HDAC6 which blocks mitochondrial transport and mediates axon growth inhibition.

It localises to the mitochondrion outer membrane. The enzyme catalyses GTP + H2O = GDP + phosphate + H(+). It carries out the reaction ATP + H2O = ADP + phosphate + H(+). It catalyses the reaction UTP + H2O = UDP + phosphate + H(+). In terms of biological role, atypical mitochondrial nucleoside-triphosphatase (NTPase) involved in mitochondrial trafficking. Probably involved in control of anterograde transport of mitochondria and their subcellular distribution. Promotes mitochondrial fission during high calcium conditions. Can hydrolyze GTP, ATP and UTP. This chain is Mitochondrial Rho GTPase 1 (RHOT1), found in Bos taurus (Bovine).